A 733-amino-acid polypeptide reads, in one-letter code: 2'-5'-oligoadenylate synthase 2 (733 aa).

Glycine 2 carries N-myristoyl glycine lipidation. OAS domain regions lie at residues 47–365 (VPSQ…CWDV) and 373–713 (TPSH…WKVP). Lysine 408 bears the N6-acetyllysine mark. Serine 427 is a binding site for ATP. Aspartate 439, aspartate 441, and aspartate 510 together coordinate Mg(2+). The ATP site is built by arginine 574 and lysine 577.

It belongs to the 2-5A synthase family. As to quaternary structure, homodimer. The cofactor is Mg(2+). Post-translationally, myristoylation is not essential for its activity. In terms of processing, glycosylated. Glycosylation is essential for its activity.

It localises to the cytoplasm. Its subcellular location is the perinuclear region. It catalyses the reaction 3 ATP = 5'-triphosphoadenylyl-(2'-&gt;5')-adenylyl-(2'-&gt;5')-adenosine + 2 diphosphate. Its activity is regulated as follows. Produced as a latent enzyme which is activated by double stranded RNA (dsRNA) generated during the course of viral infection. The dsRNA activator must be at least 15 nucleotides long, and no modification of the 2'-hydroxyl group is tolerated. ssRNA or dsDNA do not act as activators. Strongly inhibited by copper, iron and zinc ions. Partially inhibited by cobalt and nickel ions. Interferon-induced, dsRNA-activated antiviral enzyme which plays a critical role in cellular innate antiviral response. Activated by detection of double stranded RNA (dsRNA): polymerizes higher oligomers of 2'-5'-oligoadenylates (2-5A) from ATP which then bind to the inactive monomeric form of ribonuclease L (RNASEL) leading to its dimerization and subsequent activation. Activation of RNASEL leads to degradation of cellular as well as viral RNA, resulting in the inhibition of protein synthesis, thus terminating viral replication. Can mediate the antiviral effect via the classical RNASEL-dependent pathway or an alternative antiviral pathway independent of RNASEL. In addition, it may also play a role in other cellular processes such as apoptosis, cell growth, differentiation and gene regulation. May act as a negative regulator of lactation, stopping lactation in virally infected mammary gland lobules, thereby preventing transmission of viruses to neonates. Non-infected lobules would not be affected, allowing efficient pup feeding during infection. The polypeptide is 2'-5'-oligoadenylate synthase 2 (Oas2) (Rattus norvegicus (Rat)).